A 199-amino-acid polypeptide reads, in one-letter code: Holliday junction branch migration complex subunit RuvA (199 aa).

Positions 1-64 (MIGRISGLLL…EDGHFLYGFA (64 aa)) are domain I. Residues 65-143 (TDEERTAFRQ…KALPQVAGAR (79 aa)) form a domain II region. The segment at 144-154 (LAAVAGGAPDA) is flexible linker. Residues 154-199 (AKSDILNALLALGYNEKEALGAMKGLAEDTGVSDGIRQALKLLSKA) form a domain III region.

Belongs to the RuvA family. In terms of assembly, homotetramer. Forms an RuvA(8)-RuvB(12)-Holliday junction (HJ) complex. HJ DNA is sandwiched between 2 RuvA tetramers; dsDNA enters through RuvA and exits via RuvB. An RuvB hexamer assembles on each DNA strand where it exits the tetramer. Each RuvB hexamer is contacted by two RuvA subunits (via domain III) on 2 adjacent RuvB subunits; this complex drives branch migration. In the full resolvosome a probable DNA-RuvA(4)-RuvB(12)-RuvC(2) complex forms which resolves the HJ.

Its subcellular location is the cytoplasm. The RuvA-RuvB-RuvC complex processes Holliday junction (HJ) DNA during genetic recombination and DNA repair, while the RuvA-RuvB complex plays an important role in the rescue of blocked DNA replication forks via replication fork reversal (RFR). RuvA specifically binds to HJ cruciform DNA, conferring on it an open structure. The RuvB hexamer acts as an ATP-dependent pump, pulling dsDNA into and through the RuvAB complex. HJ branch migration allows RuvC to scan DNA until it finds its consensus sequence, where it cleaves and resolves the cruciform DNA. In Azoarcus sp. (strain BH72), this protein is Holliday junction branch migration complex subunit RuvA.